The chain runs to 1368 residues: DNA-directed RNA polymerase subunit beta (1368 aa).

This sequence belongs to the RNA polymerase beta chain family. The RNAP catalytic core consists of 2 alpha, 1 beta, 1 beta' and 1 omega subunit. When a sigma factor is associated with the core the holoenzyme is formed, which can initiate transcription.

It catalyses the reaction RNA(n) + a ribonucleoside 5'-triphosphate = RNA(n+1) + diphosphate. Its function is as follows. DNA-dependent RNA polymerase catalyzes the transcription of DNA into RNA using the four ribonucleoside triphosphates as substrates. In Burkholderia cenocepacia (strain HI2424), this protein is DNA-directed RNA polymerase subunit beta.